Consider the following 634-residue polypeptide: Threonine--tRNA ligase (634 aa).

The TGS domain occupies 1–61 (MINIRFPDGS…NSNCELRLIT (61 aa)). The tract at residues 241-532 (DHRKIGKVLD…LIEHYAGNLP (292 aa)) is catalytic. Zn(2+) contacts are provided by C332, H383, and H509.

It belongs to the class-II aminoacyl-tRNA synthetase family. As to quaternary structure, homodimer. It depends on Zn(2+) as a cofactor.

The protein localises to the cytoplasm. The enzyme catalyses tRNA(Thr) + L-threonine + ATP = L-threonyl-tRNA(Thr) + AMP + diphosphate + H(+). In terms of biological role, catalyzes the attachment of threonine to tRNA(Thr) in a two-step reaction: L-threonine is first activated by ATP to form Thr-AMP and then transferred to the acceptor end of tRNA(Thr). Also edits incorrectly charged L-seryl-tRNA(Thr). This chain is Threonine--tRNA ligase, found in Francisella tularensis subsp. holarctica (strain OSU18).